The chain runs to 293 residues: tRNA pseudouridine synthase B (293 aa).

The active-site Nucleophile is Asp-39.

The protein belongs to the pseudouridine synthase TruB family. Type 1 subfamily.

It carries out the reaction uridine(55) in tRNA = pseudouridine(55) in tRNA. Functionally, responsible for synthesis of pseudouridine from uracil-55 in the psi GC loop of transfer RNAs. The polypeptide is tRNA pseudouridine synthase B (Streptococcus mutans serotype c (strain ATCC 700610 / UA159)).